We begin with the raw amino-acid sequence, 219 residues long: VQ motif-containing protein 19 (219 aa).

The short motif at F47–G56 is the VQ element. The disordered stretch occupies residues Q52–N94. 7 positions are modified to phosphoserine: S59, S65, S127, S131, S139, S141, and S152. Phosphothreonine is present on T155. Disordered regions lie at residues P156–E177 and H190–M219. S192 and S195 each carry phosphoserine. A phosphothreonine mark is found at T196 and T211. 2 positions are modified to phosphoserine: S212 and S216.

In terms of processing, phosphorylated on serine and threonine residues by MPK6.

The protein localises to the nucleus. Functionally, may modulate WRKY transcription factor activities. The chain is VQ motif-containing protein 19 from Arabidopsis thaliana (Mouse-ear cress).